Here is a 107-residue protein sequence, read N- to C-terminus: Large ribosomal subunit protein P1 (107 aa).

The disordered stretch occupies residues G67–D107. Over residues A69–A86 the composition is skewed to low complexity.

This sequence belongs to the eukaryotic ribosomal protein P1/P2 family. In terms of assembly, P1 and P2 exist as dimers at the large ribosomal subunit.

Plays an important role in the elongation step of protein synthesis. The chain is Large ribosomal subunit protein P1 from Chlamydomonas reinhardtii (Chlamydomonas smithii).